A 282-amino-acid polypeptide reads, in one-letter code: Acyl-CoA-binding domain-containing protein 6 (282 aa).

The segment at Met-1–Pro-31 is disordered. The ACB domain maps to Leu-42–Pro-127. Residues Tyr-69–Lys-73 and Lys-95 each bind an acyl-CoA. Ser-106 bears the Phosphoserine mark. Tyr-114 is an an acyl-CoA binding site. ANK repeat units follow at residues Glu-191–Cys-220 and Glu-224–Leu-253.

As to quaternary structure, monomer. Detected in placenta and spleen (at protein level). Detected in placenta, umbilical cord blood, CD34-positive hematopoietic progenitor cells and bone marrow.

Its subcellular location is the cytoplasm. The protein localises to the nucleus. Its function is as follows. Binds long-chain acyl-coenzyme A molecules with a strong preference for unsaturated C18:1-CoA, lower affinity for unsaturated C20:4-CoA, and very weak affinity for saturated C16:0-CoA. Does not bind fatty acids. Plays a role in protein N-myristoylation. This chain is Acyl-CoA-binding domain-containing protein 6 (ACBD6), found in Homo sapiens (Human).